The following is a 361-amino-acid chain: Isocitrate dehydrogenase [NAD] subunit 1, mitochondrial (361 aa).

Residues 1-12 constitute a mitochondrion transit peptide; sequence MLRQGIAAQKKS. Substrate contacts are provided by R110, R141, and D229. Residue D229 participates in Mg(2+) binding.

The protein belongs to the isocitrate and isopropylmalate dehydrogenases family. In terms of assembly, octamer of two non-identical subunits IDH1 and IDH2. Requires Mg(2+) as cofactor. Mn(2+) is required as a cofactor.

The protein localises to the mitochondrion. It catalyses the reaction D-threo-isocitrate + NAD(+) = 2-oxoglutarate + CO2 + NADH. Performs an essential role in the oxidative function of the citric acid cycle. This Kluyveromyces lactis (strain ATCC 8585 / CBS 2359 / DSM 70799 / NBRC 1267 / NRRL Y-1140 / WM37) (Yeast) protein is Isocitrate dehydrogenase [NAD] subunit 1, mitochondrial (IDH1).